The sequence spans 588 residues: Sulfite reductase [NADPH] hemoprotein beta-component (588 aa).

[4Fe-4S] cluster is bound by residues cysteine 442, cysteine 448, cysteine 487, and cysteine 491. Residue cysteine 491 participates in siroheme binding.

Belongs to the nitrite and sulfite reductase 4Fe-4S domain family. In terms of assembly, alpha(8)-beta(8). The alpha component is a flavoprotein, the beta component is a hemoprotein. The cofactor is siroheme. [4Fe-4S] cluster serves as cofactor.

It carries out the reaction hydrogen sulfide + 3 NADP(+) + 3 H2O = sulfite + 3 NADPH + 4 H(+). It participates in sulfur metabolism; hydrogen sulfide biosynthesis; hydrogen sulfide from sulfite (NADPH route): step 1/1. Functionally, component of the sulfite reductase complex that catalyzes the 6-electron reduction of sulfite to sulfide. This is one of several activities required for the biosynthesis of L-cysteine from sulfate. The protein is Sulfite reductase [NADPH] hemoprotein beta-component of Actinobacillus pleuropneumoniae serotype 7 (strain AP76).